A 260-amino-acid polypeptide reads, in one-letter code: 5'-nucleotidase SurE (260 aa).

A divalent metal cation is bound by residues D8, D9, S43, and N96.

This sequence belongs to the SurE nucleotidase family. It depends on a divalent metal cation as a cofactor.

The protein localises to the cytoplasm. It carries out the reaction a ribonucleoside 5'-phosphate + H2O = a ribonucleoside + phosphate. Its function is as follows. Nucleotidase that shows phosphatase activity on nucleoside 5'-monophosphates. In Ruegeria pomeroyi (strain ATCC 700808 / DSM 15171 / DSS-3) (Silicibacter pomeroyi), this protein is 5'-nucleotidase SurE.